The following is a 325-amino-acid chain: Probable cell division protein WhiA (325 aa).

A DNA-binding region (H-T-H motif) is located at residues Ser-273–Asn-306.

This sequence belongs to the WhiA family.

In terms of biological role, involved in cell division and chromosome segregation. The chain is Probable cell division protein WhiA from Parafrankia sp. (strain EAN1pec).